The sequence spans 88 residues: U13-theraphotoxin-Cg1a (88 aa).

The signal sequence occupies residues 1 to 21 (MKVSVLITLAVLGVMFVWASA). The propeptide occupies 22–52 (AELEQSGSDQKDSDSPAWLKSMERIFQSEER). 3 disulfides stabilise this stretch: Cys54–Cys68, Cys61–Cys73, and Cys67–Cys80.

The protein belongs to the neurotoxin 10 (Hwtx-1) family. 41 (Jztx-36) subfamily. As to expression, expressed by the venom gland.

The protein resides in the secreted. Probable ion channel inhibitor. In Chilobrachys guangxiensis (Chinese earth tiger tarantula), this protein is U13-theraphotoxin-Cg1a.